Consider the following 90-residue polypeptide: YcgL domain-containing protein YE2368 (90 aa).

The YcgL domain occupies Met1 to Leu85.

The chain is YcgL domain-containing protein YE2368 from Yersinia enterocolitica serotype O:8 / biotype 1B (strain NCTC 13174 / 8081).